A 524-amino-acid polypeptide reads, in one-letter code: Probable metalloreductase AIM14 (524 aa).

The next 7 helical transmembrane spans lie at 24–44 (VNIK…VLSI), 69–89 (SIPF…LSIF), 104–121 (RLGR…FISL), 143–163 (WISR…LYKW), 179–199 (FLGV…VNVM), 206–226 (LFYI…AFHA), and 230–250 (VPLL…QRFF). Residues 105–222 (LGRMAYCLVP…VTLWMFVVLI (118 aa)) enclose the Ferric oxidoreductase domain. Residues 248-372 (RFFKSYYLHD…GGSGISFGLP (125 aa)) form the FAD-binding FR-type domain.

It belongs to the ferric reductase (FRE) family. AIM14 subfamily.

The protein resides in the membrane. Functionally, probable cell surface metalloreductase. May be involved in iron or copper homeostasis. The polypeptide is Probable metalloreductase AIM14 (AIM14) (Scheffersomyces stipitis (strain ATCC 58785 / CBS 6054 / NBRC 10063 / NRRL Y-11545) (Yeast)).